The chain runs to 433 residues: Tol-Pal system protein TolB (433 aa).

Positions 1–26 (MSLMTKLGFRALVASCLIAAGGAAHA) are cleaved as a signal peptide.

It belongs to the TolB family. As to quaternary structure, the Tol-Pal system is composed of five core proteins: the inner membrane proteins TolA, TolQ and TolR, the periplasmic protein TolB and the outer membrane protein Pal. They form a network linking the inner and outer membranes and the peptidoglycan layer.

The protein resides in the periplasm. Part of the Tol-Pal system, which plays a role in outer membrane invagination during cell division and is important for maintaining outer membrane integrity. The polypeptide is Tol-Pal system protein TolB (Burkholderia pseudomallei (strain 1710b)).